The sequence spans 320 residues: Ribose-phosphate pyrophosphokinase 1 (320 aa).

ATP is bound by residues D39–E41 and R98–Q99. Mg(2+) contacts are provided by H132 and D173. The active site involves K196. Residues R198, D224, and D228–T232 contribute to the D-ribose 5-phosphate site.

It belongs to the ribose-phosphate pyrophosphokinase family. Class I subfamily. As to quaternary structure, homohexamer. The cofactor is Mg(2+).

It localises to the cytoplasm. The catalysed reaction is D-ribose 5-phosphate + ATP = 5-phospho-alpha-D-ribose 1-diphosphate + AMP + H(+). It participates in metabolic intermediate biosynthesis; 5-phospho-alpha-D-ribose 1-diphosphate biosynthesis; 5-phospho-alpha-D-ribose 1-diphosphate from D-ribose 5-phosphate (route I): step 1/1. Involved in the biosynthesis of the central metabolite phospho-alpha-D-ribosyl-1-pyrophosphate (PRPP) via the transfer of pyrophosphoryl group from ATP to 1-hydroxyl of ribose-5-phosphate (Rib-5-P). This is Ribose-phosphate pyrophosphokinase 1 from Streptococcus pyogenes serotype M1.